We begin with the raw amino-acid sequence, 534 residues long: Probable alkaline/neutral invertase D (534 aa).

2 positions are modified to phosphoserine: serine 7 and serine 37. Phosphothreonine is present on threonine 55. Phosphoserine is present on serine 532.

It belongs to the glycosyl hydrolase 100 family.

It carries out the reaction Hydrolysis of terminal non-reducing beta-D-fructofuranoside residues in beta-D-fructofuranosides.. Its function is as follows. Invertase that cleaves sucrose into glucose and fructose. In Arabidopsis thaliana (Mouse-ear cress), this protein is Probable alkaline/neutral invertase D.